A 688-amino-acid polypeptide reads, in one-letter code: Glycine--tRNA ligase beta subunit (688 aa).

This sequence belongs to the class-II aminoacyl-tRNA synthetase family. Tetramer of two alpha and two beta subunits.

It is found in the cytoplasm. The catalysed reaction is tRNA(Gly) + glycine + ATP = glycyl-tRNA(Gly) + AMP + diphosphate. The chain is Glycine--tRNA ligase beta subunit from Haemophilus influenzae (strain PittGG).